Consider the following 217-residue polypeptide: MSNPFLKQVFNKDKTFRPKRKFEPGTQRFELHKKAQASLNAGLDLRLAVQLPPGEDLNDWVTVHVVDFFNRVNLIYGTISDGCTEQSCPVMSGGPKYEYRWQDEHKFRKPTALSAPRYMDLLMDWIEAQINNEDLFPTNVGTPFPKNFLQAVRKILSRLFRVFVHVYIHHFDRIAQMGSEAHVNTCYKHFYYFVKEFGLIDTKELEPLKEMTARMCH.

Zn(2+)-binding residues include cysteine 83, cysteine 88, histidine 165, and histidine 170.

It belongs to the MOB1/phocein family.

Its function is as follows. May regulate the activity of kinases. The chain is MOB kinase activator 3A (MOB3A) from Pongo abelii (Sumatran orangutan).